The sequence spans 76 residues: DNA polymerase III subunit theta (76 aa).

The DNA polymerase holoenzyme is a complex that contains 10 different types of subunits. These subunits are organized into 3 functionally essential subassemblies: the pol III core, the beta sliding clamp processivity factor and the clamp-loading complex. The pol III core (subunits alpha,epsilon and theta) contains the polymerase and the 3'-5' exonuclease proofreading activities. The polymerase is tethered to the template via the sliding clamp processivity factor. The clamp-loading complex assembles the beta processivity factor onto the primer template and plays a central role in the organization and communication at the replication fork. This complex contains delta, delta', psi and chi, and copies of either or both of two different DnaX proteins, gamma and tau. The composition of the holoenzyme is, therefore: (alpha,epsilon,theta)[2]-(gamma/tau)[3]-delta,delta', psi,chi-beta[4].

The enzyme catalyses DNA(n) + a 2'-deoxyribonucleoside 5'-triphosphate = DNA(n+1) + diphosphate. In terms of biological role, DNA polymerase III is a complex, multichain enzyme responsible for most of the replicative synthesis in bacteria. This DNA polymerase also exhibits 3' to 5' exonuclease activity. Its function is as follows. The exact function of the theta subunit is unknown. The protein is DNA polymerase III subunit theta (holE) of Escherichia coli O157:H7.